The chain runs to 548 residues: uncharacterized protein (548 aa).

One can recognise a DhaL domain in the interval 8-200 (KLFADMIIQG…LLCVYEGFLK (193 aa)).

This is an uncharacterized protein from Staphylococcus aureus (strain MRSA252).